The following is a 197-amino-acid chain: Imidazoleglycerol-phosphate dehydratase (197 aa).

It belongs to the imidazoleglycerol-phosphate dehydratase family.

It is found in the cytoplasm. The enzyme catalyses D-erythro-1-(imidazol-4-yl)glycerol 3-phosphate = 3-(imidazol-4-yl)-2-oxopropyl phosphate + H2O. The protein operates within amino-acid biosynthesis; L-histidine biosynthesis; L-histidine from 5-phospho-alpha-D-ribose 1-diphosphate: step 6/9. The protein is Imidazoleglycerol-phosphate dehydratase of Chromohalobacter salexigens (strain ATCC BAA-138 / DSM 3043 / CIP 106854 / NCIMB 13768 / 1H11).